Consider the following 339-residue polypeptide: Large ribosomal subunit protein uL11m (339 aa).

The protein belongs to the universal ribosomal protein uL11 family.

It localises to the mitochondrion. This is Large ribosomal subunit protein uL11m (RPL11) from Acanthamoeba castellanii (Amoeba).